Here is a 282-residue protein sequence, read N- to C-terminus: Pantothenate synthetase (282 aa).

An ATP-binding site is contributed by 30–37; it reads MGYLHEGH. Histidine 37 serves as the catalytic Proton donor. Glutamine 61 lines the (R)-pantoate pocket. Glutamine 61 lines the beta-alanine pocket. 147–150 contributes to the ATP binding site; the sequence is GMKD. Glutamine 153 contributes to the (R)-pantoate binding site. ATP-binding positions include valine 176 and 184 to 187; that span reads KSSR.

The protein belongs to the pantothenate synthetase family. As to quaternary structure, homodimer.

It is found in the cytoplasm. The enzyme catalyses (R)-pantoate + beta-alanine + ATP = (R)-pantothenate + AMP + diphosphate + H(+). Its pathway is cofactor biosynthesis; (R)-pantothenate biosynthesis; (R)-pantothenate from (R)-pantoate and beta-alanine: step 1/1. Its function is as follows. Catalyzes the condensation of pantoate with beta-alanine in an ATP-dependent reaction via a pantoyl-adenylate intermediate. The sequence is that of Pantothenate synthetase from Bacillus cytotoxicus (strain DSM 22905 / CIP 110041 / 391-98 / NVH 391-98).